The primary structure comprises 345 residues: NADPH dehydrogenase (345 aa).

FMN is bound at residue 23–26 (SPMC). Position 28 (Tyr-28) interacts with substrate. Residues Ala-60 and Gln-102 each coordinate FMN. 164–167 (HGAH) lines the substrate pocket. FMN-binding positions include Arg-215 and 307 to 308 (GR).

Belongs to the NADH:flavin oxidoreductase/NADH oxidase family. NamA subfamily. Homotetramer. Requires FMN as cofactor.

It carries out the reaction A + NADPH + H(+) = AH2 + NADP(+). Functionally, catalyzes the reduction of the double bond of an array of alpha,beta-unsaturated aldehydes and ketones. It also reduces the nitro group of nitroester and nitroaromatic compounds. It could have a role in detoxification processes. This is NADPH dehydrogenase from Bacillus cereus (strain Q1).